A 620-amino-acid polypeptide reads, in one-letter code: Protein phosphatase 2C-like domain-containing protein 1 (620 aa).

The region spanning 173-611 (GIAICSNNNS…DSITVMVMFL (439 aa)) is the PPM-type phosphatase domain.

Belongs to the PP2C family.

The protein is Protein phosphatase 2C-like domain-containing protein 1 (Pp2d1) of Mus musculus (Mouse).